The following is a 582-amino-acid chain: Cryptochrome-2 (582 aa).

In terms of domain architecture, Photolyase/cryptochrome alpha/beta spans 12–141 (CRSVHWFRRG…EVVIENSHTL (130 aa)). Residues Ser261, Gln298, His364, and 396–398 (DAD) contribute to the FAD site. Residues 521 to 559 (GPVTDSAPGQGSSTSTAVRLPQSDQASPKRKHEGAEELC) form a disordered region. The segment covering 527–546 (APGQGSSTSTAVRLPQSDQA) has biased composition (polar residues).

This sequence belongs to the DNA photolyase class-1 family. In terms of assembly, component of the circadian core oscillator, which includes the CRY proteins, CLOCK or NPAS2, BMAL1 or BMAL2, CSNK1E, and the PER proteins. FAD serves as cofactor. The cofactor is (6R)-5,10-methylene-5,6,7,8-tetrahydrofolate. As to expression, expressed in the pineal gland.

It localises to the cytoplasm. The protein resides in the nucleus. In terms of biological role, transcriptional repressor which forms a core component of the circadian clock. The circadian clock, an internal time-keeping system, regulates various physiological processes through the generation of approximately 24 hour circadian rhythms in gene expression, which are translated into rhythms in metabolism and behavior. It is derived from the Latin roots 'circa' (about) and 'diem' (day) and acts as an important regulator of a wide array of physiological functions including metabolism, sleep, body temperature, blood pressure, endocrine, immune, cardiovascular, and renal function. Consists of two major components: the central clock, residing in the suprachiasmatic nucleus (SCN) of the brain, and the peripheral clocks that are present in nearly every tissue and organ system. Both the central and peripheral clocks can be reset by environmental cues, also known as Zeitgebers (German for 'timegivers'). The predominant Zeitgeber for the central clock is light, which is sensed by retina and signals directly to the SCN. The central clock entrains the peripheral clocks through neuronal and hormonal signals, body temperature and feeding-related cues, aligning all clocks with the external light/dark cycle. Circadian rhythms allow an organism to achieve temporal homeostasis with its environment at the molecular level by regulating gene expression to create a peak of protein expression once every 24 hours to control when a particular physiological process is most active with respect to the solar day. Transcription and translation of core clock components (CLOCK, NPAS2, BMAL1, BMAL2, PER1, PER2, PER3, CRY1 and CRY2) plays a critical role in rhythm generation, whereas delays imposed by post-translational modifications (PTMs) are important for determining the period (tau) of the rhythms (tau refers to the period of a rhythm and is the length, in time, of one complete cycle). A diurnal rhythm is synchronized with the day/night cycle, while the ultradian and infradian rhythms have a period shorter and longer than 24 hours, respectively. Disruptions in the circadian rhythms contribute to the pathology of cardiovascular diseases, cancer, metabolic syndromes and aging. A transcription/translation feedback loop (TTFL) forms the core of the molecular circadian clock mechanism. Transcription factors, CLOCK or NPAS2 and BMAL1 or BMAL2, form the positive limb of the feedback loop, act in the form of a heterodimer and activate the transcription of core clock genes and clock-controlled genes (involved in key metabolic processes), harboring E-box elements (5'-CACGTG-3') within their promoters. The core clock genes: PER1/2/3 and CRY1/2 which are transcriptional repressors form the negative limb of the feedback loop and interact with the CLOCK|NPAS2-BMAL1|BMAL2 heterodimer inhibiting its activity and thereby negatively regulating their own expression. This heterodimer also activates nuclear receptors NR1D1/2, RORA/B/G, which form a second feedback loop and which activate and repress BMAL1 transcription, respectively. CRY1 and CRY2 have redundant functions but also differential and selective contributions at least in defining the pace of the SCN circadian clock and its circadian transcriptional outputs. Less potent transcriptional repressor in cerebellum and liver than CRY1, though less effective in lengthening the period of the SCN oscillator. Seems to play a critical role in tuning SCN circadian period by opposing the action of CRY1. With CRY1, dispensable for circadian rhythm generation but necessary for the development of intercellular networks for rhythm synchrony. Represses CLOCK-BMAL1-mediated transcriptional activation. This Gallus gallus (Chicken) protein is Cryptochrome-2 (CRY2).